A 211-amino-acid polypeptide reads, in one-letter code: Thiamine-phosphate synthase (211 aa).

4-amino-2-methyl-5-(diphosphooxymethyl)pyrimidine-binding positions include 37 to 41 and Asn69; that span reads QLRIK. Positions 70 and 89 each coordinate Mg(2+). 4-amino-2-methyl-5-(diphosphooxymethyl)pyrimidine is bound at residue Ser108. 134–136 lines the 2-[(2R,5Z)-2-carboxy-4-methylthiazol-5(2H)-ylidene]ethyl phosphate pocket; sequence TQT. Lys137 provides a ligand contact to 4-amino-2-methyl-5-(diphosphooxymethyl)pyrimidine. Residues Gly166 and 186-187 contribute to the 2-[(2R,5Z)-2-carboxy-4-methylthiazol-5(2H)-ylidene]ethyl phosphate site; that span reads VS.

This sequence belongs to the thiamine-phosphate synthase family. Requires Mg(2+) as cofactor.

It catalyses the reaction 2-[(2R,5Z)-2-carboxy-4-methylthiazol-5(2H)-ylidene]ethyl phosphate + 4-amino-2-methyl-5-(diphosphooxymethyl)pyrimidine + 2 H(+) = thiamine phosphate + CO2 + diphosphate. The enzyme catalyses 2-(2-carboxy-4-methylthiazol-5-yl)ethyl phosphate + 4-amino-2-methyl-5-(diphosphooxymethyl)pyrimidine + 2 H(+) = thiamine phosphate + CO2 + diphosphate. The catalysed reaction is 4-methyl-5-(2-phosphooxyethyl)-thiazole + 4-amino-2-methyl-5-(diphosphooxymethyl)pyrimidine + H(+) = thiamine phosphate + diphosphate. The protein operates within cofactor biosynthesis; thiamine diphosphate biosynthesis; thiamine phosphate from 4-amino-2-methyl-5-diphosphomethylpyrimidine and 4-methyl-5-(2-phosphoethyl)-thiazole: step 1/1. Its function is as follows. Condenses 4-methyl-5-(beta-hydroxyethyl)thiazole monophosphate (THZ-P) and 2-methyl-4-amino-5-hydroxymethyl pyrimidine pyrophosphate (HMP-PP) to form thiamine monophosphate (TMP). In Klebsiella pneumoniae subsp. pneumoniae (strain ATCC 700721 / MGH 78578), this protein is Thiamine-phosphate synthase.